Here is a 201-residue protein sequence, read N- to C-terminus: Protein ripply1 (201 aa).

Positions 1–29 (MDPAASPAAAPPAAPAAAPAADPAADPAA) are disordered. The span at 15 to 29 (PAAAPAADPAADPAA) shows a compositional bias: low complexity. A WRPW motif motif is present at residues 57-60 (AYLW). Residues 99-134 (HPVRLYWPKSHSFDYLYSAGEILLNNFPVQATINLY) form a ripply homology domain region. The segment covering 136 to 174 (DSDSADNEEDKEEEEEEEEEEDDEEEEEDEDKDVNENEP) has biased composition (acidic residues). Positions 136–201 (DSDSADNEED…SPDPHSACPN (66 aa)) are disordered.

This sequence belongs to the ripply family. In terms of tissue distribution, expressed in the anterior presomitic mesoderm and somites of stage E9.5 dpc embryos. Also expressed in tongue, diaphragm and intercostal muscles at 16.5 dpc.

It localises to the nucleus. In terms of biological role, plays a role in somitogenesis. Essential for transcriptional repression of the segmental patterning genes, thus terminating the segmentation program in the presomitic mesoderm, and also required for the maintenance of rostrocaudal polarity in somites. The protein is Protein ripply1 of Mus musculus (Mouse).